Here is a 192-residue protein sequence, read N- to C-terminus: MDIVEKVYKEGILKLKENIPQIIINLVVAGLIWVFGILVFIPIADMLGNPYLFGLTALKPIISAIITIALIIVLLRVTKDFGELMDGIADIIAVKLAGSRVNEEKLKKYRRGLRGLAYLIVAIIAYLFFLPVISGITPVLAGIVLIILVLWAVTVLINIGHIFSEEIEEGIRIATEKLEKALEKSVKNEENE.

This is an uncharacterized protein from Methanocaldococcus jannaschii (strain ATCC 43067 / DSM 2661 / JAL-1 / JCM 10045 / NBRC 100440) (Methanococcus jannaschii).